The chain runs to 295 residues: Nucleotide-binding protein Lxx11490 (295 aa).

An ATP-binding site is contributed by 19 to 26 (GMSGAGRS). Residue 70–73 (DVRG) coordinates GTP.

This sequence belongs to the RapZ-like family.

Functionally, displays ATPase and GTPase activities. The protein is Nucleotide-binding protein Lxx11490 of Leifsonia xyli subsp. xyli (strain CTCB07).